The sequence spans 313 residues: N-acetyl-gamma-glutamyl-phosphate reductase 2 (313 aa).

Cys-117 is a catalytic residue.

This sequence belongs to the NAGSA dehydrogenase family. Type 2 subfamily.

It is found in the cytoplasm. The enzyme catalyses N-acetyl-L-glutamate 5-semialdehyde + phosphate + NADP(+) = N-acetyl-L-glutamyl 5-phosphate + NADPH + H(+). It participates in amino-acid biosynthesis; L-arginine biosynthesis; N(2)-acetyl-L-ornithine from L-glutamate: step 3/4. Its function is as follows. Catalyzes the NADPH-dependent reduction of N-acetyl-5-glutamyl phosphate to yield N-acetyl-L-glutamate 5-semialdehyde. This Pseudomonas putida (strain ATCC 47054 / DSM 6125 / CFBP 8728 / NCIMB 11950 / KT2440) protein is N-acetyl-gamma-glutamyl-phosphate reductase 2.